Consider the following 340-residue polypeptide: Ferredoxin--NADP reductase (340 aa).

8 residues coordinate FAD: T20, D39, Q47, Y52, V92, F126, D293, and T334.

It belongs to the ferredoxin--NADP reductase type 2 family. In terms of assembly, homodimer. Requires FAD as cofactor.

It catalyses the reaction 2 reduced [2Fe-2S]-[ferredoxin] + NADP(+) + H(+) = 2 oxidized [2Fe-2S]-[ferredoxin] + NADPH. This is Ferredoxin--NADP reductase from Gluconobacter oxydans (strain 621H) (Gluconobacter suboxydans).